Consider the following 553-residue polypeptide: Putative transport protein YidE (553 aa).

5 consecutive transmembrane segments (helical) span residues 4-24 (IALT…IGNV), 28-48 (GIGL…HFVS), 65-85 (FGLI…FFAS), 95-115 (LFAV…HKLF), and 158-178 (MSYA…MWML). 2 RCK C-terminal domains span residues 191-276 (QQHE…VIGQ) and 279-361 (DTSL…VLGN). A run of 6 helical transmembrane segments spans residues 371–391 (MLPV…PVFV), 393–413 (GFPA…ALIL), 439–459 (IVLF…NTLV), 464–484 (LSWI…VGIL), 493–513 (YLTM…LAFA), and 533–553 (LVMF…WSIG).

The protein belongs to the AAE transporter (TC 2.A.81) family. YidE subfamily.

The protein resides in the cell membrane. The chain is Putative transport protein YidE from Shigella boydii serotype 4 (strain Sb227).